The chain runs to 337 residues: RNA 3'-terminal phosphate cyclase (337 aa).

ATP is bound by residues Q101 and 282-285; that span reads HMSD. The active-site Tele-AMP-histidine intermediate is the H306.

It belongs to the RNA 3'-terminal cyclase family. Type 1 subfamily.

The protein localises to the cytoplasm. It carries out the reaction a 3'-end 3'-phospho-ribonucleotide-RNA + ATP = a 3'-end 2',3'-cyclophospho-ribonucleotide-RNA + AMP + diphosphate. Functionally, catalyzes the conversion of 3'-phosphate to a 2',3'-cyclic phosphodiester at the end of RNA. The mechanism of action of the enzyme occurs in 3 steps: (A) adenylation of the enzyme by ATP; (B) transfer of adenylate to an RNA-N3'P to produce RNA-N3'PP5'A; (C) and attack of the adjacent 2'-hydroxyl on the 3'-phosphorus in the diester linkage to produce the cyclic end product. The biological role of this enzyme is unknown but it is likely to function in some aspects of cellular RNA processing. This is RNA 3'-terminal phosphate cyclase (rtcA) from Saccharolobus solfataricus (strain ATCC 35092 / DSM 1617 / JCM 11322 / P2) (Sulfolobus solfataricus).